Consider the following 658-residue polypeptide: NADH-ubiquinone oxidoreductase chain 5 (658 aa).

The next 17 helical transmembrane spans lie at 4-23, 30-52, 81-103, 112-129, 133-155, 168-190, 200-222, 243-262, 272-294, 301-319, 329-351, 364-386, 409-431, 452-471, 505-527, 607-629, and 639-656; these read TLIV…GRKI, IITC…EVGI, LTVS…SISY, RFFS…ILVT, YLLM…NFWF, LLTN…WSFG, LAPY…GATA, VSAL…LLMR, TVLI…IGLF, VIAY…GIGL, LVNH…HSVA, PFLP…VPFM, IVYF…VLYL, LFLN…FGFL, VPVL…SILY, LSTG…YIST, and LLIL…NKLL.

The protein belongs to the complex I subunit 5 family.

It is found in the mitochondrion inner membrane. The enzyme catalyses a ubiquinone + NADH + 5 H(+)(in) = a ubiquinol + NAD(+) + 4 H(+)(out). Functionally, core subunit of the mitochondrial membrane respiratory chain NADH dehydrogenase (Complex I) that is believed to belong to the minimal assembly required for catalysis. Complex I functions in the transfer of electrons from NADH to the respiratory chain. The immediate electron acceptor for the enzyme is believed to be ubiquinone. The protein is NADH-ubiquinone oxidoreductase chain 5 (nad5) of Talaromyces marneffei (Penicillium marneffei).